The sequence spans 465 residues: Cysteine--tRNA ligase (465 aa).

C27 provides a ligand contact to Zn(2+). A 'HIGH' region motif is present at residues P29–N39. C207, H232, and E236 together coordinate Zn(2+). The 'KMSKS' region signature appears at K264–S268. K267 lines the ATP pocket.

This sequence belongs to the class-I aminoacyl-tRNA synthetase family. Monomer. It depends on Zn(2+) as a cofactor.

Its subcellular location is the cytoplasm. The enzyme catalyses tRNA(Cys) + L-cysteine + ATP = L-cysteinyl-tRNA(Cys) + AMP + diphosphate. This chain is Cysteine--tRNA ligase, found in Clostridium kluyveri (strain NBRC 12016).